A 121-amino-acid polypeptide reads, in one-letter code: DNA-directed RNA polymerase subunit Rpo8 (121 aa).

The protein belongs to the archaeal Rpo8 RNA polymerase subunit family. Part of the 13-subunit RNA polymerase complex. Post-translationally, this subunit is phosphorylated.

It localises to the cytoplasm. It catalyses the reaction RNA(n) + a ribonucleoside 5'-triphosphate = RNA(n+1) + diphosphate. In terms of biological role, DNA-dependent RNA polymerase (RNAP) catalyzes the transcription of DNA into RNA using the four ribonucleoside triphosphates as substrates. The polypeptide is DNA-directed RNA polymerase subunit Rpo8 (Sulfolobus acidocaldarius (strain ATCC 33909 / DSM 639 / JCM 8929 / NBRC 15157 / NCIMB 11770)).